We begin with the raw amino-acid sequence, 1546 residues long: Lysophospholipase NTE1 (1546 aa).

Over 1–45 the chain is Cytoplasmic; it reads MKDSTEALNSIAFAVDTTLSSILPSSLAPPSAPPATSSFLKSIWY. The chain crosses the membrane as a helical span at residues 46–66; sequence AFWWLWSMVVFKIMNIILLYI. Topologically, residues 67–81 are lumenal; it reads PSKIMNALSINFEIT. A helical transmembrane segment spans residues 82–102; sequence LNLSSILVALSAIITVCFLVV. The Cytoplasmic segment spans residues 103–1546; the sequence is RYKYLTGYSK…KKVLYRRNSI (1444 aa). Residues 689 to 820 and 816 to 965 contribute to the a nucleoside 3',5'-cyclic phosphate site; these read PTEF…LKKL and KLKK…VASK. Residues 1239-1403 enclose the PNPLA domain; it reads LVLGGGGSRG…LDNLPVSEMK (165 aa). A GXGXXG motif is present at residues 1243-1248; that stretch reads GGGSRG. Residues 1270–1274 carry the GXSXG motif; the sequence is GTSIG. S1272 functions as the Nucleophile in the catalytic mechanism. D1390 functions as the Proton acceptor in the catalytic mechanism. The DGA/G motif lies at 1390-1392; it reads DGG.

This sequence belongs to the NTE family.

Its subcellular location is the endoplasmic reticulum membrane. The enzyme catalyses a 1-acyl-sn-glycero-3-phosphocholine + H2O = sn-glycerol 3-phosphocholine + a fatty acid + H(+). Inhibited by organophosphorus esters. Intracellular phospholipase B that catalyzes the double deacylation of phosphatidylcholine (PC) to glycerophosphocholine (GroPCho). Plays an important role in membrane lipid homeostasis. Responsible for the rapid PC turnover in response to inositol, elevated temperatures, or when choline is present in the growth medium. The sequence is that of Lysophospholipase NTE1 (NTE1) from Scheffersomyces stipitis (strain ATCC 58785 / CBS 6054 / NBRC 10063 / NRRL Y-11545) (Yeast).